The sequence spans 74 residues: ATP synthase subunit c (74 aa).

2 consecutive transmembrane segments (helical) span residues 9–29 and 54–74; these read IGAG…GNIF and FALT…ILFV.

Belongs to the ATPase C chain family. F-type ATPases have 2 components, F(1) - the catalytic core - and F(0) - the membrane proton channel. F(1) has five subunits: alpha(3), beta(3), gamma(1), delta(1), epsilon(1). F(0) has three main subunits: a(1), b(2) and c(10-14). The alpha and beta chains form an alternating ring which encloses part of the gamma chain. F(1) is attached to F(0) by a central stalk formed by the gamma and epsilon chains, while a peripheral stalk is formed by the delta and b chains.

The protein localises to the cell inner membrane. Functionally, f(1)F(0) ATP synthase produces ATP from ADP in the presence of a proton or sodium gradient. F-type ATPases consist of two structural domains, F(1) containing the extramembraneous catalytic core and F(0) containing the membrane proton channel, linked together by a central stalk and a peripheral stalk. During catalysis, ATP synthesis in the catalytic domain of F(1) is coupled via a rotary mechanism of the central stalk subunits to proton translocation. In terms of biological role, key component of the F(0) channel; it plays a direct role in translocation across the membrane. A homomeric c-ring of between 10-14 subunits forms the central stalk rotor element with the F(1) delta and epsilon subunits. This Gluconacetobacter diazotrophicus (strain ATCC 49037 / DSM 5601 / CCUG 37298 / CIP 103539 / LMG 7603 / PAl5) protein is ATP synthase subunit c.